The sequence spans 469 residues: RNA-editing ligase 1, mitochondrial (469 aa).

A mitochondrion-targeting transit peptide spans 1-44; it reads MQLQRLGAPLLKRLVGGCIRQSTAPIMPCVVVSGSGGFLTPVRT. ATP contacts are provided by residues 59 to 61, 86 to 92, N92, R111, E159, F209, and 307 to 309; these read IEI, EKVHGTN, and KLR. The active-site N6-AMP-lysine intermediate is K87. The disordered stretch occupies residues 450 to 469; the sequence is AAAQSEAIPPLSPAAPTKGE.

It belongs to the RNA ligase 2 family. In terms of assembly, component of the RNA editing complex (editosome), a 1600 kDa complex composed of at least 20 proteins. Interacts with terminal uridylyltransferase MEAT1.

It localises to the mitochondrion. The enzyme catalyses ATP + (ribonucleotide)n-3'-hydroxyl + 5'-phospho-(ribonucleotide)m = (ribonucleotide)n+m + AMP + diphosphate.. In terms of biological role, essential for RNA editing. RNA editing in kinetoplastid mitochondria inserts and deletes uridylates at multiple sites in pre-mRNAs as directed by guide RNAs. The sequence is that of RNA-editing ligase 1, mitochondrial (REL1) from Trypanosoma brucei brucei (strain 927/4 GUTat10.1).